Reading from the N-terminus, the 444-residue chain is Glutamate--tRNA ligase 1 (444 aa).

A 'HIGH' region motif is present at residues 10–20; that stretch reads PSPTGRLHLGN. The 'KMSKS' region signature appears at 241-245; sequence GLSKR. Lys244 provides a ligand contact to ATP.

Belongs to the class-I aminoacyl-tRNA synthetase family. Glutamate--tRNA ligase type 1 subfamily. In terms of assembly, monomer.

The protein resides in the cytoplasm. It carries out the reaction tRNA(Glu) + L-glutamate + ATP = L-glutamyl-tRNA(Glu) + AMP + diphosphate. In terms of biological role, catalyzes the attachment of glutamate to tRNA(Glu) in a two-step reaction: glutamate is first activated by ATP to form Glu-AMP and then transferred to the acceptor end of tRNA(Glu). The polypeptide is Glutamate--tRNA ligase 1 (Rhodospirillum rubrum (strain ATCC 11170 / ATH 1.1.1 / DSM 467 / LMG 4362 / NCIMB 8255 / S1)).